A 483-amino-acid chain; its full sequence is MTPETDALKVQILPKHQSLPYTVTKAKSKSLILLVVVSVTITLGLLLYVFNSNSVISSGSLLSRRCKLRYSVLIDAGSSGTRVHVFGYWFESGKPVFDFGEKHYANLKLTPGLSSYADNPEGASVSVTKLVEFAKQRIPKRMFRRSDIRLMATAGMRLLEVPVQEQILEVTRRVLRSSGFMFRDEWANVISGSDEGIYSWITANYALGSLGTDPLETTGIVELGGASAQVTFVSSEHVPPEYSRTIAYGNISYTIYSHSFLDYGKDAALKKLLEKLQNSANSTVDGVVEDPCTPKGYIYDTNSKNYSSGFLADESKLKGSLQAAGNFSKCRSATFALLKEGKENCLYEHCSIGSTFTPDLQGSFLATASFYYTAKFFELEEKGWLSELIPAGKRYCGEEWSKLILEYPTTDEEYLRGYCFSAAYTISMLHDSLGIALDDESITYASKAGEKHIPLDWALGAFILDVVTPNSDYNGKSRKYLGF.

The Cytoplasmic portion of the chain corresponds to 1–29 (MTPETDALKVQILPKHQSLPYTVTKAKSK). The helical; Signal-anchor for type II membrane protein transmembrane segment at 30 to 50 (SLILLVVVSVTITLGLLLYVF) threads the bilayer. At 51 to 483 (NSNSVISSGS…NGKSRKYLGF (433 aa)) the chain is on the extracellular side. 72–82 (VLIDAGSSGTR) lines the ATP pocket. Glu-195 serves as the catalytic Proton acceptor. 219–229 (GIVELGGASAQ) serves as a coordination point for ATP. N-linked (GlcNAc...) asparagine glycosylation is found at Asn-250, Asn-281, Asn-305, and Asn-326.

The protein belongs to the GDA1/CD39 NTPase family. Ca(2+) serves as cofactor. As to expression, expressed in the initiation zone of lateral root and in the lateral root tip, the adaxial junction of lateral shoots with the stems, and in the abscission zone of flower organs. Not expressed in the rosette leaves.

Its subcellular location is the membrane. The enzyme catalyses a ribonucleoside 5'-triphosphate + 2 H2O = a ribonucleoside 5'-phosphate + 2 phosphate + 2 H(+). In terms of biological role, catalyzes the hydrolysis of phosphoanhydride bonds of nucleoside tri- and di-phosphates. The polypeptide is Probable apyrase 3 (APY3) (Arabidopsis thaliana (Mouse-ear cress)).